Reading from the N-terminus, the 357-residue chain is Elongation factor Ts (357 aa).

Residues T82 to V85 form an involved in Mg(2+) ion dislocation from EF-Tu region.

The protein belongs to the EF-Ts family.

The protein resides in the cytoplasm. Functionally, associates with the EF-Tu.GDP complex and induces the exchange of GDP to GTP. It remains bound to the aminoacyl-tRNA.EF-Tu.GTP complex up to the GTP hydrolysis stage on the ribosome. This Campylobacter jejuni (strain RM1221) protein is Elongation factor Ts.